Here is a 483-residue protein sequence, read N- to C-terminus: Cobyric acid synthase (483 aa).

The region spanning 252–439 (KLNVVVPVLT…LHGFFDEAEA (188 aa)) is the GATase cobBQ-type domain. The active-site Nucleophile is Cys333. His431 is a catalytic residue.

The protein belongs to the CobB/CobQ family. CobQ subfamily.

The protein operates within cofactor biosynthesis; adenosylcobalamin biosynthesis. Its function is as follows. Catalyzes amidations at positions B, D, E, and G on adenosylcobyrinic A,C-diamide. NH(2) groups are provided by glutamine, and one molecule of ATP is hydrogenolyzed for each amidation. The polypeptide is Cobyric acid synthase (Vibrio parahaemolyticus serotype O3:K6 (strain RIMD 2210633)).